The following is a 164-amino-acid chain: MALNLQGKQAIVAEVNEAANGALSAVVADSRGVTVGAITALRKEARANGVWMKVVRNTLAKRALEGTQFECLSDSFVGPSLIAFSSEHPGAAARIFSAFAKKNEKFELKTAAFEGNVVDAAMLATLPTYDEAVARLMSAMKEASAGKLCKTIEAVRVQKEEQAA.

The protein belongs to the universal ribosomal protein uL10 family. As to quaternary structure, part of the ribosomal stalk of the 50S ribosomal subunit. The N-terminus interacts with L11 and the large rRNA to form the base of the stalk. The C-terminus forms an elongated spine to which L12 dimers bind in a sequential fashion forming a multimeric L10(L12)X complex.

Forms part of the ribosomal stalk, playing a central role in the interaction of the ribosome with GTP-bound translation factors. This is Large ribosomal subunit protein uL10 from Pseudoalteromonas translucida (strain TAC 125).